We begin with the raw amino-acid sequence, 364 residues long: ERCC4 domain-containing protein EP364R (364 aa).

The ERCC4 domain maps to 3–102 (FLVADHREHH…QLYFFVEGPA (100 aa)). Over residues 319-328 (ASRPATQPAA) the composition is skewed to polar residues. The disordered stretch occupies residues 319 to 352 (ASRPATQPAATQPLHEVSDDATSNASDTSSPIGH). The segment covering 338 to 348 (DATSNASDTSS) has biased composition (low complexity).

Belongs to the asfivirus EP364R family.

Functionally, plays a role in the inhibition of type I interferon signaling pathway. Mechanistically, specifically interacts with 2',3'-cGAMP and cleaves it via its phosphodiesterase activity. In turn, prevents 2',3'-cGAMP interaction with host ER-resident STING1 leading to inhibition of downstream signaling pathway and type I interferon production. The sequence is that of ERCC4 domain-containing protein EP364R from African swine fever virus (strain Badajoz 1971 Vero-adapted) (Ba71V).